A 220-amino-acid chain; its full sequence is Ribosomal RNA large subunit methyltransferase E (220 aa).

S-adenosyl-L-methionine-binding residues include Gly-60, Trp-62, Asp-92, Asp-108, and Asp-133. Lys-173 functions as the Proton acceptor in the catalytic mechanism. A disordered region spans residues 197-220 (RKPKASRDKSSETFILGRQLKQPR).

This sequence belongs to the class I-like SAM-binding methyltransferase superfamily. RNA methyltransferase RlmE family.

It localises to the cytoplasm. The enzyme catalyses uridine(2552) in 23S rRNA + S-adenosyl-L-methionine = 2'-O-methyluridine(2552) in 23S rRNA + S-adenosyl-L-homocysteine + H(+). In terms of biological role, specifically methylates the uridine in position 2552 of 23S rRNA at the 2'-O position of the ribose in the fully assembled 50S ribosomal subunit. The sequence is that of Ribosomal RNA large subunit methyltransferase E from Burkholderia ambifaria (strain MC40-6).